A 331-amino-acid chain; its full sequence is Lipoyl synthase (331 aa).

A disordered region spans residues 1–33 (MSDALIATSSEAPQSPAEQYDPTRKQKSADKTA). The segment covering 7-17 (ATSSEAPQSPA) has biased composition (polar residues). A compositionally biased stretch (basic and acidic residues) spans 21 to 33 (DPTRKQKSADKTA). 7 residues coordinate [4Fe-4S] cluster: Cys-78, Cys-83, Cys-89, Cys-104, Cys-108, Cys-111, and Ser-318. The Radical SAM core domain occupies 89-307 (CFGKGTATFM…EEEAYKMGFT (219 aa)).

This sequence belongs to the radical SAM superfamily. Lipoyl synthase family. It depends on [4Fe-4S] cluster as a cofactor.

The protein localises to the cytoplasm. It catalyses the reaction [[Fe-S] cluster scaffold protein carrying a second [4Fe-4S](2+) cluster] + N(6)-octanoyl-L-lysyl-[protein] + 2 oxidized [2Fe-2S]-[ferredoxin] + 2 S-adenosyl-L-methionine + 4 H(+) = [[Fe-S] cluster scaffold protein] + N(6)-[(R)-dihydrolipoyl]-L-lysyl-[protein] + 4 Fe(3+) + 2 hydrogen sulfide + 2 5'-deoxyadenosine + 2 L-methionine + 2 reduced [2Fe-2S]-[ferredoxin]. It functions in the pathway protein modification; protein lipoylation via endogenous pathway; protein N(6)-(lipoyl)lysine from octanoyl-[acyl-carrier-protein]: step 2/2. Catalyzes the radical-mediated insertion of two sulfur atoms into the C-6 and C-8 positions of the octanoyl moiety bound to the lipoyl domains of lipoate-dependent enzymes, thereby converting the octanoylated domains into lipoylated derivatives. In Cupriavidus necator (strain ATCC 17699 / DSM 428 / KCTC 22496 / NCIMB 10442 / H16 / Stanier 337) (Ralstonia eutropha), this protein is Lipoyl synthase.